The following is a 759-amino-acid chain: Secretin XpsD (759 aa).

The first 21 residues, 1 to 21, serve as a signal peptide directing secretion; that stretch reads MSERMTPRLFPVSLLIGLLAG. A lipid anchor (N-palmitoyl cysteine) is attached at Cys-22. Cys-22 is lipidated: S-diacylglycerol cysteine. Low complexity predominate over residues 40 to 51; it reads VGAAGATQTTAE. The disordered stretch occupies residues 40–69; that stretch reads VGAAGATQTTAEQRADGNASAKPTPVIRRG. The segment at 92 to 187 is N0; it reads GSATFNFEGE…APSTASPSAA (96 aa). The segment at 189–253 is N1; sequence GFEVRVVPLK…VQIFDVDWLS (65 aa). The interval 254–323 is N2; that stretch reads GMSVGVFPIQ…IQQWLDRIDS (70 aa). Residues 326–474 are N3; that stretch reads GGVRLFSYEL…SIRDVIEKLD (149 aa). The segment at 352-434 is disordered; sequence GGRGNGGNSG…PPSTNQNGSV (83 aa). Over residues 392 to 401 the composition is skewed to gly residues; the sequence is ATGGDIGGTS. A compositionally biased stretch (polar residues) spans 425 to 434; it reads PPSTNQNGSV. Positions 479 to 734 are secretin; that stretch reads QVHIEAQIAE…VLITPSIVRN (256 aa). The interval 736–759 is s domain; sequence QDARDLTDEYGSKFKSMRPMDVHK.

This sequence belongs to the bacterial secretin family. GSP D subfamily. In terms of assembly, forms a cylindrical channel with 15 subunits. Binds to XpsN.

The protein resides in the cell outer membrane. Involved in a type II secretion system (T2SS, formerly general secretion pathway, GSP) for the export of proteins. This subunit forms the outer membrane channel. In Xanthomonas campestris pv. campestris (strain ATCC 33913 / DSM 3586 / NCPPB 528 / LMG 568 / P 25), this protein is Secretin XpsD (xpsD).